The following is a 268-amino-acid chain: Putative sgc region protein SgcQ (268 aa).

The protein belongs to the BtpA family.

The polypeptide is Putative sgc region protein SgcQ (sgcQ) (Escherichia coli (strain K12)).